The primary structure comprises 577 residues: Arginine--tRNA ligase (577 aa).

Positions 122-132 (PNVAKEMHVGH) match the 'HIGH' region motif.

The protein belongs to the class-I aminoacyl-tRNA synthetase family. In terms of assembly, monomer.

It localises to the cytoplasm. It catalyses the reaction tRNA(Arg) + L-arginine + ATP = L-arginyl-tRNA(Arg) + AMP + diphosphate. The protein is Arginine--tRNA ligase of Escherichia coli O127:H6 (strain E2348/69 / EPEC).